A 410-amino-acid polypeptide reads, in one-letter code: Acetate kinase (410 aa).

Residue Asn-7 coordinates Mg(2+). Lys-14 lines the ATP pocket. Substrate is bound at residue Arg-98. Catalysis depends on Asp-155, which acts as the Proton donor/acceptor. Residues His-215–Gly-219, Asp-290–Arg-292, and Gly-338–Asn-342 contribute to the ATP site. Glu-392 serves as a coordination point for Mg(2+).

The protein belongs to the acetokinase family. As to quaternary structure, homodimer. Mg(2+) serves as cofactor. The cofactor is Mn(2+).

It localises to the cytoplasm. The enzyme catalyses acetate + ATP = acetyl phosphate + ADP. It functions in the pathway metabolic intermediate biosynthesis; acetyl-CoA biosynthesis; acetyl-CoA from acetate: step 1/2. Catalyzes the formation of acetyl phosphate from acetate and ATP. Can also catalyze the reverse reaction. This is Acetate kinase from Kocuria rhizophila (strain ATCC 9341 / DSM 348 / NBRC 103217 / DC2201).